Here is a 378-residue protein sequence, read N- to C-terminus: MKLKEVTEGKVRIFVPDPKEYMIEGKFDPSWAPVFYNPKMTFNRDLSVIVVSLLKPKIILDALSATGIRGIRYYVESWKSEQLILNDKNSTAASLIQINVKNNGIENAKIYNKDANALLYEIKSEYIDIDPFGSPVPFILSSINATIRNGIVAFTATDLSPLEGSSRTSCRRKYDAINYKLSSSKELGLRILIGKIIREAATLEKTVHPLFSFYADYYYRLFVIVESGARKADENINKNLKYFGECPRCGFQTFVDENCKTKCPICGENFIIIGPLYIGPLHNMEFLKRMIDTYSDFNYLSSFNRIQKLLNVIEKEAKYKSVFYNISKLASKLKVSAIPPIDSILECLGDASKTHFAPTGIRTDKGYEEIIRCVKSLR.

Residues 4–374 (KEVTEGKVRI…KGYEEIIRCV (371 aa)) enclose the Trm1 methyltransferase domain. Positions 44, 69, 87, 114, and 115 each coordinate S-adenosyl-L-methionine. Cys-246, Cys-249, Cys-263, and Cys-266 together coordinate Zn(2+).

The protein belongs to the class I-like SAM-binding methyltransferase superfamily. Trm1 family.

It catalyses the reaction guanosine(26) in tRNA + 2 S-adenosyl-L-methionine = N(2)-dimethylguanosine(26) in tRNA + 2 S-adenosyl-L-homocysteine + 2 H(+). In terms of biological role, dimethylates a single guanine residue at position 26 of a number of tRNAs using S-adenosyl-L-methionine as donor of the methyl groups. The chain is tRNA (guanine(26)-N(2))-dimethyltransferase from Saccharolobus islandicus (strain M.14.25 / Kamchatka #1) (Sulfolobus islandicus).